The sequence spans 82 residues: Probable [Fe-S]-dependent transcriptional repressor (82 aa).

Iron-sulfur cluster-binding residues include C56, C61, C64, and C71.

The protein belongs to the FeoC family.

Its function is as follows. May function as a transcriptional regulator that controls feoABC expression. This is Probable [Fe-S]-dependent transcriptional repressor from Yersinia enterocolitica serotype O:8 / biotype 1B (strain NCTC 13174 / 8081).